The sequence spans 122 residues: Lysozyme (122 aa).

Residues 3–118 (GGIVSQRCLS…WNRLQKISGC (116 aa)) enclose the I-type lysozyme domain. Cystine bridges form between cysteine 10/cysteine 86, cysteine 13/cysteine 118, cysteine 15/cysteine 21, cysteine 26/cysteine 35, cysteine 48/cysteine 68, cysteine 58/cysteine 64, and cysteine 82/cysteine 100. The active-site Proton donor is the glutamate 18. Aspartate 29 (nucleophile) is an active-site residue. 41 to 47 (KEAYWID) is a binding site for substrate. Residues tyrosine 72, histidine 93, 93–95 (HNG), and lysine 102 contribute to the substrate site.

This sequence belongs to the glycosyl hydrolase 22 family. Type-I lysozyme subfamily. As to quaternary structure, monomer.

The protein localises to the secreted. The catalysed reaction is Hydrolysis of (1-&gt;4)-beta-linkages between N-acetylmuramic acid and N-acetyl-D-glucosamine residues in a peptidoglycan and between N-acetyl-D-glucosamine residues in chitodextrins.. In terms of biological role, has bacteriolytic activity against Gram-positive bacteria M.luteus. Also has chitinase activity. The polypeptide is Lysozyme (Meretrix lusoria (Hard clam)).